The primary structure comprises 155 residues: Endoribonuclease YbeY (155 aa).

Residues His-116, His-120, and His-126 each contribute to the Zn(2+) site.

This sequence belongs to the endoribonuclease YbeY family. The cofactor is Zn(2+).

Its subcellular location is the cytoplasm. Single strand-specific metallo-endoribonuclease involved in late-stage 70S ribosome quality control and in maturation of the 3' terminus of the 16S rRNA. In Colwellia psychrerythraea (strain 34H / ATCC BAA-681) (Vibrio psychroerythus), this protein is Endoribonuclease YbeY.